The following is a 238-amino-acid chain: Probable transcriptional regulatory protein YcdB (238 aa).

The protein belongs to the TACO1 family. YeeN subfamily.

It localises to the cytoplasm. The chain is Probable transcriptional regulatory protein YcdB (ycdB) from Lactococcus lactis subsp. lactis (strain IL1403) (Streptococcus lactis).